A 1459-amino-acid chain; its full sequence is NKSRKRRNRLSFLGAATVEPPKPIPLTWKTEKPVWVNQWPLPKQKLEALHLLANEQLEKGHIEPSFSPWNSPVFVIQKKSGKWRMLTDLRAVNAVIQPMGPLQPGLPSPAMIPKDWPLIIIDLKDCFFTIPLAEQDCEKFAFTIPAINNKEPATRFQWKVLPQGMLNSPTICQTFVGRALQPVREKFSDCYIIHYIDDILCAAETRDKLIDCYTFLQAEVANAGLAIASDKIQTSTPFHYLGMQIENRKIKQQKIEIRKDTLKTLNDFQKLLGDINWIRPTLGIPTYAMSNLFSILRGDSDLNSKRILTPEATKEIKLVEEKIQSAQINRIDPLAPLQLLIFATAHSPTGIIIQNTDLVEWSFLPHSTVKTFTLYLDQIATLIGQTRLRIIKLCGNDPDKIVVPLTKEQVRQAFINSGAWQIGLANFVGIIDNHYPKTKIFQFLKLTTWILPKITRREPLENALTVFTDGSSNGKAAYTGPKERVIKTPYQSAQRAELVAVITVLQDFDQPINIISDSAYVVQATRDVETALIKYSMDDQLNQLFNLLQQTVRKRNFPFYITHIRAHTNLPGPLTKANEQADLLVSSALIKAQELHALTHVNAAGLKNKFDVTWKQAKDIVQHCTQCQILHLPTQEAGVNPRGLCPNALWQMDVTHVPSFGRLSYVHVTVDTYSHFIWATCQTGESTSHVKKHLLSCFAVMGVPEKIKTDNGPGYCSKAFQKFLSQWKISHTTGIPYNSQGQAIVERTNRTLKTQLVKQKEGGDSKECTTPQMQLNLALYTLNFLNIYRNQTTTSAEQHLTGKKNSPHEGKLIWWKDNKNKTWEIGKVITWGRGFACVSPGENQLPVWIPTRHLKFYNEPIGDAKKRASTEMVTPVTWMDNPIEIYVNDSVWVPGPIDDRCPAKPEEEGMMINISIGYRYPPICLGRAPGCLMPAVQNWLVEVPTVSPISRFTYHMVSGMSLRPRVNYLQDFSYQRSLKFRPKGKPCPKEIPKESKNTEVLVWEECVANSAVILQNNEFGTIIDWAPRGQFYHNCSGQTQSCPSAQVSPAVDSDLTESLDKHKHKKLQSFYPWEWGEKGISTPRPKIVSPVSGPEHPELWRLTVASHHIRIWSGNQTLETRDCKPFYTIDLNSSLTVPLQSCVKPPYMLVVGNIVIKPDSQTITCENCRLLTCIDSTFNWQHRILLVRAREGVWIPVSMDRPWEASPSVHILTEVLKGVLNRSKRFIFTLIAVIMGLIAVTATAAVAGVALHSSVQSVNFVNDWQKNSTRLWNSQSSIDQKLANQINDLRQTVIWMGDRLMSLEHRFQLQCDWNTSDFCITPQIYNESEHHWDMVRRHLQGREDNLTLDISKLKEQIFEASKAHLNLVPGTEAIAGVADGLANLNPVTWVKTIGSTTIINLILILVCLFCLLLVCRCTQQLRRDSDHRERAMMTMAVLSKRKGGNVGKSKRDQIVTVSV.

Residues 57–245 form the Reverse transcriptase domain; sequence LEKGHIEPSF…TPFHYLGMQI (189 aa). Residues 161 to 164 carry the LPQG motif; that stretch reads LPQG. Positions 195–198 match the YXDD motif; sequence YIDD. Residues 460-590 form the RNase H type-1 domain; that stretch reads LENALTVFTD…ADLLVSSALI (131 aa). Mg(2+)-binding residues include Asp469, Glu497, Asp517, and Asp582. Residues 587–628 form an Integrase-type zinc finger; that stretch reads SALIKAQELHALTHVNAAGLKNKFDVTWKQAKDIVQHCTQCQ. Residues His596, His600, Cys624, and Cys627 each coordinate Zn(2+). Positions 642-803 constitute an Integrase catalytic domain; that stretch reads RGLCPNALWQ…TSAEQHLTGK (162 aa). The integrase-type DNA-binding region spans 811–859; sequence KLIWWKDNKNKTWEIGKVITWGRGFACVSPGENQLPVWIPTRHLKFYNE.

Belongs to the beta type-B retroviral polymerase family. HERV class-II K(HML-2) pol subfamily.

The enzyme catalyses DNA(n) + a 2'-deoxyribonucleoside 5'-triphosphate = DNA(n+1) + diphosphate. It carries out the reaction Endonucleolytic cleavage to 5'-phosphomonoester.. Functionally, early post-infection, the reverse transcriptase converts the viral RNA genome into double-stranded viral DNA. The RNase H domain of the reverse transcriptase performs two functions. It degrades the RNA template and specifically removes the RNA primer from the RNA/DNA hybrid. Following nuclear import, the integrase catalyzes the insertion of the linear, double-stranded viral DNA into the host cell chromosome. Endogenous Pol proteins may have kept, lost or modified their original function during evolution. The sequence is that of Endogenous retrovirus group K member 7 Pol protein (ERVK-7) from Homo sapiens (Human).